A 175-amino-acid chain; its full sequence is uncharacterized protein (175 aa).

This sequence belongs to the asfivirus B175L family.

This is an uncharacterized protein from African swine fever virus (strain Badajoz 1971 Vero-adapted) (Ba71V).